The primary structure comprises 258 residues: Shikimate dehydrogenase (NADP(+)) (258 aa).

Residues 14–16 (SES) and Thr61 each bind shikimate. Lys65 serves as the catalytic Proton acceptor. 2 residues coordinate shikimate: Asn86 and Asp101. NADP(+) contacts are provided by residues 125–129 (GSGGS) and Leu211. Tyr213 is a binding site for shikimate. Gly234 lines the NADP(+) pocket.

It belongs to the shikimate dehydrogenase family. As to quaternary structure, homodimer.

The enzyme catalyses shikimate + NADP(+) = 3-dehydroshikimate + NADPH + H(+). It functions in the pathway metabolic intermediate biosynthesis; chorismate biosynthesis; chorismate from D-erythrose 4-phosphate and phosphoenolpyruvate: step 4/7. In terms of biological role, involved in the biosynthesis of the chorismate, which leads to the biosynthesis of aromatic amino acids. Catalyzes the reversible NADPH linked reduction of 3-dehydroshikimate (DHSA) to yield shikimate (SA). The chain is Shikimate dehydrogenase (NADP(+)) from Clostridium botulinum (strain 657 / Type Ba4).